A 387-amino-acid polypeptide reads, in one-letter code: Cysteine desulfurase IscS (387 aa).

Residues 73–74 (AT), asparagine 155, glutamine 183, and 203–205 (SAH) contribute to the pyridoxal 5'-phosphate site. Lysine 206 is modified (N6-(pyridoxal phosphate)lysine). A pyridoxal 5'-phosphate-binding site is contributed by threonine 241. Cysteine 328 functions as the Cysteine persulfide intermediate in the catalytic mechanism. [2Fe-2S] cluster is bound at residue cysteine 328.

The protein belongs to the class-V pyridoxal-phosphate-dependent aminotransferase family. NifS/IscS subfamily. In terms of assembly, homodimer. Forms a heterotetramer with IscU, interacts with other sulfur acceptors. Requires pyridoxal 5'-phosphate as cofactor.

Its subcellular location is the cytoplasm. The catalysed reaction is (sulfur carrier)-H + L-cysteine = (sulfur carrier)-SH + L-alanine. It participates in cofactor biosynthesis; iron-sulfur cluster biosynthesis. Master enzyme that delivers sulfur to a number of partners involved in Fe-S cluster assembly, tRNA modification or cofactor biosynthesis. Catalyzes the removal of elemental sulfur atoms from cysteine to produce alanine. Functions as a sulfur delivery protein for Fe-S cluster synthesis onto IscU, an Fe-S scaffold assembly protein, as well as other S acceptor proteins. This Helicobacter pylori (strain Shi470) protein is Cysteine desulfurase IscS.